The sequence spans 379 residues: Guanine nucleotide-binding protein G(s) subunit alpha (379 aa).

The segment at 1-29 is disordered; that stretch reads MGCFGSAGAKGDAEENKKRKEANKNINKQ. The N-palmitoyl glycine moiety is linked to residue Gly2. Cys3 is lipidated: S-palmitoyl cysteine. Residues 39 to 379 form the G-alpha domain; it reads ATHRLLLLGA…RMHLRQYELL (341 aa). The segment at 42–55 is G1 motif; the sequence is RLLLLGAGESGKST. GTP is bound by residues 47-54, 183-189, 208-212, 277-280, and Ala351; these read GAGESGKS, LRCRVLT, DVGGQ, and NKQD. Positions 54 and 189 each coordinate Mg(2+). The interval 181-189 is G2 motif; it reads DILRCRVLT. The tract at residues 204–213 is G3 motif; that stretch reads FHMFDVGGQR. The segment at 273 to 280 is G4 motif; it reads ILFLNKQD. The tract at residues 349–354 is G5 motif; the sequence is TCAVDT.

The protein belongs to the G-alpha family. G(s) subfamily. As to quaternary structure, g proteins are composed of 3 units; alpha, beta and gamma. The alpha chain contains the guanine nucleotide binding site.

Guanine nucleotide-binding proteins (G proteins) are involved as modulators or transducers in various transmembrane signaling systems. The G(s) protein is involved in hormonal regulation of adenylate cyclase: it activates the cyclase in response to beta-adrenergic stimuli. This chain is Guanine nucleotide-binding protein G(s) subunit alpha, found in Homarus americanus (American lobster).